The following is a 178-amino-acid chain: Cytidylate kinase (178 aa).

An ATP-binding site is contributed by 7–15 (GLPGTGTTT).

Belongs to the cytidylate kinase family. Type 2 subfamily.

It localises to the cytoplasm. It carries out the reaction CMP + ATP = CDP + ADP. The enzyme catalyses dCMP + ATP = dCDP + ADP. The sequence is that of Cytidylate kinase from Methanococcus maripaludis (strain C5 / ATCC BAA-1333).